Reading from the N-terminus, the 305-residue chain is Tyrosine recombinase XerC (305 aa).

Positions 4–95 (TSIQALINKW…AVKNFYRFLE (92 aa)) constitute a Core-binding (CB) domain. Positions 116–298 (LLPKALSEDD…SIKHLEAVYT (183 aa)) constitute a Tyr recombinase domain. Active-site residues include Arg159, Lys182, His250, Arg253, and His276. The active-site O-(3'-phospho-DNA)-tyrosine intermediate is Tyr285.

It belongs to the 'phage' integrase family. XerC subfamily. In terms of assembly, forms a cyclic heterotetrameric complex composed of two molecules of XerC and two molecules of XerD.

It localises to the cytoplasm. Its function is as follows. Site-specific tyrosine recombinase, which acts by catalyzing the cutting and rejoining of the recombining DNA molecules. The XerC-XerD complex is essential to convert dimers of the bacterial chromosome into monomers to permit their segregation at cell division. It also contributes to the segregational stability of plasmids. The protein is Tyrosine recombinase XerC of Rickettsia peacockii (strain Rustic).